A 108-amino-acid polypeptide reads, in one-letter code: Zinc finger protein 475 (108 aa).

2 C2HC/C3H-type zinc fingers span residues 6-35 (PAVV…KWHN) and 79-108 (QLVP…KAAK). Zn(2+) is bound by residues cysteine 10, cysteine 13, histidine 25, cysteine 29, cysteine 83, cysteine 86, histidine 98, and cysteine 102.

Requires Zn(2+) as cofactor.

This Homo sapiens (Human) protein is Zinc finger protein 475.